Reading from the N-terminus, the 693-residue chain is Elongation factor G (693 aa).

The tr-type G domain occupies 8-282 (EKTRNIGIMA…AVLDYLPSPL (275 aa)). GTP contacts are provided by residues 17–24 (AHVDAGKT), 81–85 (DTPGH), and 135–138 (NKMD).

It belongs to the TRAFAC class translation factor GTPase superfamily. Classic translation factor GTPase family. EF-G/EF-2 subfamily.

It localises to the cytoplasm. In terms of biological role, catalyzes the GTP-dependent ribosomal translocation step during translation elongation. During this step, the ribosome changes from the pre-translocational (PRE) to the post-translocational (POST) state as the newly formed A-site-bound peptidyl-tRNA and P-site-bound deacylated tRNA move to the P and E sites, respectively. Catalyzes the coordinated movement of the two tRNA molecules, the mRNA and conformational changes in the ribosome. This Enterococcus faecalis (strain ATCC 700802 / V583) protein is Elongation factor G.